A 164-amino-acid polypeptide reads, in one-letter code: Peptide methionine sulfoxide reductase MsrA (164 aa).

Residue cysteine 16 is part of the active site.

The protein belongs to the MsrA Met sulfoxide reductase family.

It catalyses the reaction L-methionyl-[protein] + [thioredoxin]-disulfide + H2O = L-methionyl-(S)-S-oxide-[protein] + [thioredoxin]-dithiol. The catalysed reaction is [thioredoxin]-disulfide + L-methionine + H2O = L-methionine (S)-S-oxide + [thioredoxin]-dithiol. In terms of biological role, has an important function as a repair enzyme for proteins that have been inactivated by oxidation. Catalyzes the reversible oxidation-reduction of methionine sulfoxide in proteins to methionine. The protein is Peptide methionine sulfoxide reductase MsrA of Methanoculleus marisnigri (strain ATCC 35101 / DSM 1498 / JR1).